Reading from the N-terminus, the 404-residue chain is Immediate early response gene 5-like protein (404 aa).

3 disordered regions span residues 86–107 (AADFGPLQLGGGGDAEAREPAA), 160–231 (AALQ…APAS), and 308–327 (QEEEEDDEEDAGGLGAEPPG). Residues 177 to 194 (PLQPGPAPLPLPLPPPAP) are compositionally biased toward pro residues. Residues 195-231 (AALCPRDPRAPAACSAPPGAAPPAAAASPPASPAPAS) are compositionally biased toward low complexity. Acidic residues predominate over residues 308 to 318 (QEEEEDDEEDA).

Belongs to the IER family.

The sequence is that of Immediate early response gene 5-like protein (IER5L) from Homo sapiens (Human).